Here is a 144-residue protein sequence, read N- to C-terminus: Prefoldin subunit alpha (144 aa).

It belongs to the prefoldin subunit alpha family. In terms of assembly, heterohexamer of two alpha and four beta subunits.

It is found in the cytoplasm. Its function is as follows. Molecular chaperone capable of stabilizing a range of proteins. Seems to fulfill an ATP-independent, HSP70-like function in archaeal de novo protein folding. This Methanosarcina barkeri (strain Fusaro / DSM 804) protein is Prefoldin subunit alpha.